Reading from the N-terminus, the 689-residue chain is Protein CFAP20DC (689 aa).

Disordered stretches follow at residues 143 to 179, 217 to 236, 241 to 262, 333 to 424, and 583 to 660; these read GPPP…TVEK, LPIM…NNNR, LKST…NNTN, SKES…PSEL, and SIST…LSVE. Over residues 150 to 176 the composition is skewed to polar residues; that stretch reads RRSNMRISSETVRSVGSKNNRSCQPST. Over residues 343–359 the composition is skewed to polar residues; the sequence is EESQSVPKDIFTFSSRP. Over residues 394–405 the composition is skewed to acidic residues; that stretch reads SEDDFYGGDSSE. A compositionally biased stretch (polar residues) spans 411–421; that stretch reads IQGSRGPTTGP. A compositionally biased stretch (low complexity) spans 583–593; it reads SISTSSDDTTT.

This Macaca fascicularis (Crab-eating macaque) protein is Protein CFAP20DC (CFAP20DC).